Here is a 119-residue protein sequence, read N- to C-terminus: Putative transmembrane protein ORF119 (119 aa).

3 helical membrane passes run threonine 9–valine 29, glutamine 73–threonine 93, and proline 95–tyrosine 115.

The protein localises to the host membrane. This Acidianus convivator (ATV) protein is Putative transmembrane protein ORF119.